We begin with the raw amino-acid sequence, 845 residues long: G-type lectin S-receptor-like serine/threonine-protein kinase At1g11410 (845 aa).

Residues 1-21 form the signal peptide; that stretch reads MKFFFIFFIFLFSFLIQSCYS. The Bulb-type lectin domain maps to 22 to 147; that stretch reads DNTILRSQSL…VTGKSFWESF (126 aa). At 22–441 the chain is on the extracellular side; sequence DNTILRSQSL…NGNGASGKKR (420 aa). Residues Asn82, Asn103, Asn185, Asn231, and Asn259 are each glycosylated (N-linked (GlcNAc...) asparagine). The 39-residue stretch at 283-321 folds into the EGF-like domain; the sequence is PEDKCDIYNHCGFNGYCDSTSTEKFECSCLPGYEPKTPR. 2 cysteine pairs are disulfide-bonded: Cys287–Cys299 and Cys293–Cys309. The PAN domain maps to 341 to 424; the sequence is CNGKEGFAKL…SGQDFYLRVD (84 aa). Residues Asn357, Asn366, and Asn379 are each glycosylated (N-linked (GlcNAc...) asparagine). Cystine bridges form between Cys372–Cys399 and Cys376–Cys382. The helical transmembrane segment at 442 to 462 threads the bilayer; the sequence is LVLILISLIAVVMLLLISFHC. At 463 to 845 the chain is on the cytoplasmic side; that stretch reads YLRKRRQRTQ…DVTLTDVQGR (383 aa). The 286-residue stretch at 523 to 808 folds into the Protein kinase domain; the sequence is FAFQNKLGAG…DLPSPKHPAF (286 aa). ATP is bound by residues 529 to 537 and Lys551; that span reads LGAGGFGPV. Residues 612 to 629 are caM-binding; it reads EQRAELDWPKRMGIIRGI. Asp648 (proton acceptor) is an active-site residue. Residues 803 to 845 form a disordered region; the sequence is PKHPAFTAGRRRNTKTGGSSDNWPSGETSSTINDVTLTDVQGR. Residues 817–845 are compositionally biased toward polar residues; sequence KTGGSSDNWPSGETSSTINDVTLTDVQGR.

The protein belongs to the protein kinase superfamily. Ser/Thr protein kinase family.

It localises to the cell membrane. The enzyme catalyses L-seryl-[protein] + ATP = O-phospho-L-seryl-[protein] + ADP + H(+). The catalysed reaction is L-threonyl-[protein] + ATP = O-phospho-L-threonyl-[protein] + ADP + H(+). The polypeptide is G-type lectin S-receptor-like serine/threonine-protein kinase At1g11410 (Arabidopsis thaliana (Mouse-ear cress)).